A 315-amino-acid chain; its full sequence is Glutathione synthetase (315 aa).

The ATP-grasp domain maps to 125 to 310 (KLYTAWFADL…ITGMLMDAIE (186 aa)). 151–207 (WEKHGDIIMKPLDGMGGASIFRVKEGDPNIGVIAETLTELGNRYCMAQNYLPAIKDG) lines the ATP pocket. Mg(2+) is bound by residues glutamate 281 and asparagine 283.

Belongs to the prokaryotic GSH synthase family. The cofactor is Mg(2+). Requires Mn(2+) as cofactor.

The enzyme catalyses gamma-L-glutamyl-L-cysteine + glycine + ATP = glutathione + ADP + phosphate + H(+). The protein operates within sulfur metabolism; glutathione biosynthesis; glutathione from L-cysteine and L-glutamate: step 2/2. This is Glutathione synthetase from Salmonella typhi.